The chain runs to 473 residues: Ribulose bisphosphate carboxylase large chain (473 aa).

Positions 1 to 2 are excised as a propeptide; that stretch reads MS. Pro-3 carries the post-translational modification N-acetylproline. Lys-14 bears the N6,N6,N6-trimethyllysine mark. Substrate is bound by residues Asn-123 and Thr-173. The Proton acceptor role is filled by Lys-175. Position 177 (Lys-177) interacts with substrate. 3 residues coordinate Mg(2+): Lys-201, Asp-203, and Glu-204. The residue at position 201 (Lys-201) is an N6-carboxylysine. The active-site Proton acceptor is the His-294. The substrate site is built by Arg-295, His-327, and Ser-379.

The protein belongs to the RuBisCO large chain family. Type I subfamily. As to quaternary structure, heterohexadecamer of 8 large chains and 8 small chains; disulfide-linked. The disulfide link is formed within the large subunit homodimers. Mg(2+) serves as cofactor. Post-translationally, the disulfide bond which can form in the large chain dimeric partners within the hexadecamer appears to be associated with oxidative stress and protein turnover.

It localises to the plastid. It is found in the chloroplast. It carries out the reaction 2 (2R)-3-phosphoglycerate + 2 H(+) = D-ribulose 1,5-bisphosphate + CO2 + H2O. The enzyme catalyses D-ribulose 1,5-bisphosphate + O2 = 2-phosphoglycolate + (2R)-3-phosphoglycerate + 2 H(+). Functionally, ruBisCO catalyzes two reactions: the carboxylation of D-ribulose 1,5-bisphosphate, the primary event in carbon dioxide fixation, as well as the oxidative fragmentation of the pentose substrate in the photorespiration process. Both reactions occur simultaneously and in competition at the same active site. In Ajuga chamaepitys (Yellow bugle), this protein is Ribulose bisphosphate carboxylase large chain.